A 301-amino-acid chain; its full sequence is Protoheme IX farnesyltransferase (301 aa).

9 consecutive transmembrane segments (helical) span residues 29-49 (VVALMLLTVLVGMCLAVPGTV), 51-71 (LVPLIAGMAGIGMMAGSAAAF), 96-116 (ISIIKAISFASILGTLGFIIL), 123-143 (LTAWLTFASLIGYAVVYTAYL), 151-171 (IVVGGLAGAMPPLLGWTAVTG), 177-197 (ALLLVIIIFAWTPPHFWALAI), 223-243 (CIFLYTVLLAIACLLPVLVGM), 244-264 (CGPVYLVSSTLLSAGFIYKAW), and 281-301 (FSIYHLMLLFIALLVDHYLWV).

It belongs to the UbiA prenyltransferase family. Protoheme IX farnesyltransferase subfamily.

The protein resides in the cell inner membrane. It catalyses the reaction heme b + (2E,6E)-farnesyl diphosphate + H2O = Fe(II)-heme o + diphosphate. Its pathway is porphyrin-containing compound metabolism; heme O biosynthesis; heme O from protoheme: step 1/1. Converts heme B (protoheme IX) to heme O by substitution of the vinyl group on carbon 2 of heme B porphyrin ring with a hydroxyethyl farnesyl side group. This Shewanella pealeana (strain ATCC 700345 / ANG-SQ1) protein is Protoheme IX farnesyltransferase.